The chain runs to 347 residues: Protein YIPF3 (347 aa).

Residues 1-28 (MATQAAPASGVRNGAGPEWGGFEENIQG) are disordered. A2 is subject to N-acetylalanine. Residues 2–145 (ATQAAPASGV…PIKMVNFPQK (144 aa)) are Cytoplasmic-facing. A helical membrane pass occupies residues 146 to 166 (VAGELYGPLMLVFTLVAILLH). Residues 167-184 (GMKTSDTIIREGTLMGTA) lie on the Lumenal side of the membrane. The chain crosses the membrane as a helical span at residues 185-205 (IGTCFGYWLGVSSFIYFLAYL). Residues 206–211 (CNAQIT) lie on the Cytoplasmic side of the membrane. A helical membrane pass occupies residues 212–234 (MLQMLALLGYGLFGHCIVLFITY). The Lumenal segment spans residues 235-237 (NIH). A helical membrane pass occupies residues 238–260 (LHALFYLFWLLLGGLSTLRMVAV). The Cytoplasmic portion of the chain corresponds to 261-271 (LVSRTVGPTQR). Residues 272 to 292 (LLLCGTLAALHMLFLLYLHFA) traverse the membrane as a helical segment. The Lumenal portion of the chain corresponds to 293–347 (YHKVVEGILDTLEGPNIPPMQRVPRDIPAVLPAAKLPVAVVNATAKAIAVTLQSH). N334 carries an N-linked (GlcNAc...) asparagine glycan.

It belongs to the YIP1 family. Interacts with YIPF4 and YIPF5.

The protein localises to the cell membrane. The protein resides in the golgi apparatus. Its subcellular location is the cis-Golgi network membrane. It is found in the cytoplasm. In terms of biological role, involved in the maintenance of the Golgi structure. May play a role in hematopoiesis. The protein is Protein YIPF3 (Yipf3) of Rattus norvegicus (Rat).